Consider the following 486-residue polypeptide: Pup--protein ligase (486 aa).

A Mg(2+)-binding site is contributed by E33. R76 is a binding site for ATP. Y78 provides a ligand contact to Mg(2+). The Proton acceptor role is filled by D80. E86 contacts Mg(2+). The ATP site is built by T89 and W451.

The protein belongs to the Pup ligase/Pup deamidase family. Pup-conjugating enzyme subfamily.

The catalysed reaction is ATP + [prokaryotic ubiquitin-like protein]-L-glutamate + [protein]-L-lysine = ADP + phosphate + N(6)-([prokaryotic ubiquitin-like protein]-gamma-L-glutamyl)-[protein]-L-lysine.. It functions in the pathway protein degradation; proteasomal Pup-dependent pathway. It participates in protein modification; protein pupylation. Its function is as follows. Catalyzes the covalent attachment of the prokaryotic ubiquitin-like protein modifier Pup to the proteasomal substrate proteins, thereby targeting them for proteasomal degradation. This tagging system is termed pupylation. The ligation reaction involves the side-chain carboxylate of the C-terminal glutamate of Pup and the side-chain amino group of a substrate lysine. The chain is Pup--protein ligase from Bifidobacterium longum (strain NCC 2705).